Consider the following 149-residue polypeptide: Hydrogenase expression/formation protein HupT (149 aa).

It belongs to the HupJ family.

The chain is Hydrogenase expression/formation protein HupT (hupT) from Azotobacter chroococcum mcd 1.